The primary structure comprises 122 residues: Small ribosomal subunit protein uS13 (122 aa).

A compositionally biased stretch (basic residues) spans 98-116 (VRGQKTKTNARTRKGRRKT). A disordered region spans residues 98–122 (VRGQKTKTNARTRKGRRKTVGAATK).

Belongs to the universal ribosomal protein uS13 family. Part of the 30S ribosomal subunit. Forms a loose heterodimer with protein S19. Forms two bridges to the 50S subunit in the 70S ribosome.

Located at the top of the head of the 30S subunit, it contacts several helices of the 16S rRNA. In the 70S ribosome it contacts the 23S rRNA (bridge B1a) and protein L5 of the 50S subunit (bridge B1b), connecting the 2 subunits; these bridges are implicated in subunit movement. Contacts the tRNAs in the A and P-sites. The sequence is that of Small ribosomal subunit protein uS13 from Campylobacter fetus subsp. fetus (strain 82-40).